Reading from the N-terminus, the 501-residue chain is Glycerol kinase 1 (501 aa).

ADP is bound at residue Thr16. The ATP site is built by Thr16, Thr17, and Ser18. Thr16 contacts sn-glycerol 3-phosphate. Residue Arg20 coordinates ADP. Residues Arg84, Glu85, Tyr135, and Asp242 each coordinate sn-glycerol 3-phosphate. Glycerol contacts are provided by Arg84, Glu85, Tyr135, Asp242, and Gln243. ADP contacts are provided by Thr264 and Gly307. ATP contacts are provided by Thr264, Gly307, Gln311, and Gly408. Gly408 contacts ADP.

The protein belongs to the FGGY kinase family.

It carries out the reaction glycerol + ATP = sn-glycerol 3-phosphate + ADP + H(+). The protein operates within polyol metabolism; glycerol degradation via glycerol kinase pathway; sn-glycerol 3-phosphate from glycerol: step 1/1. In terms of biological role, key enzyme in the regulation of glycerol uptake and metabolism. Catalyzes the phosphorylation of glycerol to yield sn-glycerol 3-phosphate. The sequence is that of Glycerol kinase 1 from Saccharolobus solfataricus (strain ATCC 35092 / DSM 1617 / JCM 11322 / P2) (Sulfolobus solfataricus).